A 264-amino-acid polypeptide reads, in one-letter code: MKQYLDLMKKVLEEGTPKADRTGTGTLSIFGHQMRFNLQDGFPLVTTKRCHLRSIIHELLWFLNGDTNIAYLKENNVSIWDEWADENGDLGPIYGKQWRAWGAADGRKIDQLSNVVNQLKQDPDSRRIIVSAWNVGELDQMALAPCHAFFQFYVADGKLSCQLYQRSCDVFLGLPFNIASYALLVHMMAQQCDLAVGDFVWTGGDTHLYSNHIDQAHLQLSREPRVLPKLVIKRKPDSLFDYHFDDFDIEGYDPHPGIKAPIAI.

Arginine 21 is a dUMP binding site. Histidine 51 is a binding site for (6R)-5,10-methylene-5,6,7,8-tetrahydrofolate. Residue 126 to 127 (RR) participates in dUMP binding. The Nucleophile role is filled by cysteine 146. DUMP contacts are provided by residues 166–169 (RSCD), asparagine 177, and 207–209 (HLY). (6R)-5,10-methylene-5,6,7,8-tetrahydrofolate is bound at residue aspartate 169. (6R)-5,10-methylene-5,6,7,8-tetrahydrofolate is bound at residue alanine 263.

Belongs to the thymidylate synthase family. Bacterial-type ThyA subfamily. Homodimer.

The protein resides in the cytoplasm. It catalyses the reaction dUMP + (6R)-5,10-methylene-5,6,7,8-tetrahydrofolate = 7,8-dihydrofolate + dTMP. It functions in the pathway pyrimidine metabolism; dTTP biosynthesis. Catalyzes the reductive methylation of 2'-deoxyuridine-5'-monophosphate (dUMP) to 2'-deoxythymidine-5'-monophosphate (dTMP) while utilizing 5,10-methylenetetrahydrofolate (mTHF) as the methyl donor and reductant in the reaction, yielding dihydrofolate (DHF) as a by-product. This enzymatic reaction provides an intracellular de novo source of dTMP, an essential precursor for DNA biosynthesis. This chain is Thymidylate synthase, found in Yersinia pestis bv. Antiqua (strain Antiqua).